Here is a 397-residue protein sequence, read N- to C-terminus: DNA-directed RNA polymerase subunit Rpo1C (397 aa).

It belongs to the RNA polymerase beta' chain family. As to quaternary structure, part of the RNA polymerase complex.

Its subcellular location is the cytoplasm. The catalysed reaction is RNA(n) + a ribonucleoside 5'-triphosphate = RNA(n+1) + diphosphate. In terms of biological role, DNA-dependent RNA polymerase (RNAP) catalyzes the transcription of DNA into RNA using the four ribonucleoside triphosphates as substrates. Forms part of the jaw domain. The polypeptide is DNA-directed RNA polymerase subunit Rpo1C (Methanococcus aeolicus (strain ATCC BAA-1280 / DSM 17508 / OCM 812 / Nankai-3)).